We begin with the raw amino-acid sequence, 444 residues long: 23S rRNA (uracil(1939)-C(5))-methyltransferase RlmD (444 aa).

One can recognise a TRAM domain in the interval 5–64 (KPKLNLTSQTARIVNLSHDGRGIARVNGKATFIQGALPGEVVEFQYTRIKKDFDEGKLLS). Residues cysteine 77, cysteine 83, cysteine 86, and cysteine 166 each coordinate [4Fe-4S] cluster. S-adenosyl-L-methionine-binding residues include glutamine 276, phenylalanine 305, asparagine 310, glutamate 326, asparagine 353, and aspartate 374. Residue cysteine 400 is the Nucleophile of the active site.

Belongs to the class I-like SAM-binding methyltransferase superfamily. RNA M5U methyltransferase family. RlmD subfamily.

It carries out the reaction uridine(1939) in 23S rRNA + S-adenosyl-L-methionine = 5-methyluridine(1939) in 23S rRNA + S-adenosyl-L-homocysteine + H(+). Catalyzes the formation of 5-methyl-uridine at position 1939 (m5U1939) in 23S rRNA. This is 23S rRNA (uracil(1939)-C(5))-methyltransferase RlmD from Legionella pneumophila (strain Corby).